A 100-amino-acid polypeptide reads, in one-letter code: Urease subunit gamma (100 aa).

Belongs to the urease gamma subunit family. In terms of assembly, heterotrimer of UreA (gamma), UreB (beta) and UreC (alpha) subunits. Three heterotrimers associate to form the active enzyme.

It localises to the cytoplasm. It catalyses the reaction urea + 2 H2O + H(+) = hydrogencarbonate + 2 NH4(+). It participates in nitrogen metabolism; urea degradation; CO(2) and NH(3) from urea (urease route): step 1/1. In Cyanothece sp. (strain PCC 7425 / ATCC 29141), this protein is Urease subunit gamma.